Consider the following 220-residue polypeptide: Putative NAD(P)H nitroreductase (220 aa).

155-160 (GASALG) provides a ligand contact to NAD(+).

Belongs to the nitroreductase family. FMN serves as cofactor.

The polypeptide is Putative NAD(P)H nitroreductase (Haemophilus influenzae (strain ATCC 51907 / DSM 11121 / KW20 / Rd)).